A 251-amino-acid polypeptide reads, in one-letter code: 2,3-bisphosphoglycerate-dependent phosphoglycerate mutase (251 aa).

Substrate-binding positions include 7 to 14 (RHGESEWN), 20 to 21 (TG), arginine 59, 86 to 89 (ERHY), lysine 97, 113 to 114 (RR), and 186 to 187 (GN). Residue histidine 8 is the Tele-phosphohistidine intermediate of the active site. The Proton donor/acceptor role is filled by glutamate 86.

Belongs to the phosphoglycerate mutase family. BPG-dependent PGAM subfamily.

It catalyses the reaction (2R)-2-phosphoglycerate = (2R)-3-phosphoglycerate. The protein operates within carbohydrate degradation; glycolysis; pyruvate from D-glyceraldehyde 3-phosphate: step 3/5. In terms of biological role, catalyzes the interconversion of 2-phosphoglycerate and 3-phosphoglycerate. The protein is 2,3-bisphosphoglycerate-dependent phosphoglycerate mutase of Treponema pallidum (strain Nichols).